A 648-amino-acid polypeptide reads, in one-letter code: Beta-glucuronidase (648 aa).

The N-terminal stretch at 1–22 is a signal peptide; it reads MSLKWSACWVALGQLLCSCALA. N-linked (GlcNAc...) asparagine glycans are attached at residues asparagine 172 and asparagine 416. Glutamate 447 acts as the Proton donor in catalysis. Asparagine 627 is a glycosylation site (N-linked (GlcNAc...) asparagine).

Belongs to the glycosyl hydrolase 2 family. In terms of assembly, homotetramer.

Its subcellular location is the lysosome. It localises to the endoplasmic reticulum. The catalysed reaction is a beta-D-glucuronoside + H2O = D-glucuronate + an alcohol. Its activity is regulated as follows. Inhibited by L-aspartic acid. Plays an important role in the degradation of dermatan and keratan sulfates. The chain is Beta-glucuronidase (Gusb) from Mus musculus (Mouse).